The following is a 1380-amino-acid chain: DNA-directed RNA polymerase subunit beta (1380 aa).

This sequence belongs to the RNA polymerase beta chain family. As to quaternary structure, the RNAP catalytic core consists of 2 alpha, 1 beta, 1 beta' and 1 omega subunit. When a sigma factor is associated with the core the holoenzyme is formed, which can initiate transcription.

It carries out the reaction RNA(n) + a ribonucleoside 5'-triphosphate = RNA(n+1) + diphosphate. In terms of biological role, DNA-dependent RNA polymerase catalyzes the transcription of DNA into RNA using the four ribonucleoside triphosphates as substrates. This Ehrlichia ruminantium (strain Welgevonden) protein is DNA-directed RNA polymerase subunit beta.